A 210-amino-acid chain; its full sequence is Ras-related protein Rab-8 (210 aa).

15–22 (GDSGVGKT) is a GTP binding site. An Effector region motif is present at residues 37–45 (FISTIGIDF). GTP-binding positions include 63-67 (DTAGQ) and 121-124 (NKCD). A Cysteine methyl ester modification is found at Cys-207. Residue Cys-207 is the site of S-geranylgeranyl cysteine attachment. The propeptide at 208–210 (SLL) is removed in mature form.

It belongs to the small GTPase superfamily. Rab family.

The protein localises to the cell membrane. The polypeptide is Ras-related protein Rab-8 (Diplobatis ommata (Ocellated electric ray)).